A 129-amino-acid polypeptide reads, in one-letter code: Histone H2B.1 (129 aa).

Basic and acidic residues predominate over residues 1–19 (MAPKAEKKPASKAPAEKKP). Residues 1–37 (MAPKAEKKPASKAPAEKKPAAKKTASTDSKKRTKTRK) are disordered. Residues Lys7 and Lys8 each carry the N6-acetyllysine; alternate modification. Residues Lys7 and Lys8 each participate in a glycyl lysine isopeptide (Lys-Gly) (interchain with G-Cter in SUMO); alternate cross-link. Position 11 is a phosphoserine (Ser11). Lys12 carries the post-translational modification N6-acetyllysine. Residue Lys17 is modified to N6-acetyllysine; alternate. Lys17 participates in a covalent cross-link: Glycyl lysine isopeptide (Lys-Gly) (interchain with G-Cter in SUMO); alternate. Lys18 is covalently cross-linked (Glycyl lysine isopeptide (Lys-Gly) (interchain with G-Cter in SUMO)). Lys123 participates in a covalent cross-link: Glycyl lysine isopeptide (Lys-Gly) (interchain with G-Cter in ubiquitin).

Belongs to the histone H2B family. As to quaternary structure, the nucleosome is a histone octamer containing two molecules each of H2A, H2B, H3 and H4 assembled in one H3-H4 heterotetramer and two H2A-H2B heterodimers. The octamer wraps approximately 147 bp of DNA. Monoubiquitinated by the UBC2-BRE1 complex to form H2BK123ub1. H2BK123ub1 gives a specific tag for epigenetic transcriptional activation and is also prerequisite for H3K4me and H3K79me formation. H2BK123ub1 also modulates the formation of double-strand breaks during meiosis and is a prerequisite for DNA-damage checkpoint activation. Post-translationally, phosphorylated by STE20 to form H2BS10ph during progression through meiotic prophase. May be correlated with chromosome condensation. In terms of processing, acetylated by GCN5 to form H2BK11ac and H2BK16ac. H2BK16ac can also be formed by ESA1. Acetylation of N-terminal lysines and particularly formation of H2BK11acK16ac has a positive effect on transcription. Sumoylation to form H2BK6su or H2BK7su, and probably also H2BK16su or H2BK17su, occurs preferentially near the telomeres and represses gene transcription.

The protein resides in the nucleus. It is found in the chromosome. In terms of biological role, core component of nucleosome. Nucleosomes wrap and compact DNA into chromatin, limiting DNA accessibility to the cellular machineries which require DNA as a template. Histones thereby play a central role in transcription regulation, DNA repair, DNA replication and chromosomal stability. DNA accessibility is regulated via a complex set of post-translational modifications of histones, also called histone code, and nucleosome remodeling. The protein is Histone H2B.1 (HTB1) of Meyerozyma guilliermondii (strain ATCC 6260 / CBS 566 / DSM 6381 / JCM 1539 / NBRC 10279 / NRRL Y-324) (Yeast).